The primary structure comprises 452 residues: Protein henna (452 aa).

One can recognise an ACT domain in the interval 36-107 (FSPKDSSLSS…EQCSYFNIIS (72 aa)). Serine 272 is subject to Phosphoserine; by CaMK2. The Fe cation site is built by histidine 284, histidine 289, and glutamate 329.

This sequence belongs to the biopterin-dependent aromatic amino acid hydroxylase family. It depends on Fe(2+) as a cofactor. In terms of tissue distribution, phenylalanine hydrolase activity is found in yolk granules of embryos, and female abdomen and fat body tissues. Tryptophan hydroxylase is expressed in serotonergic neurons. Both enzymes are present in cuticular tissues.

The enzyme catalyses (6R)-L-erythro-5,6,7,8-tetrahydrobiopterin + L-phenylalanine + O2 = (4aS,6R)-4a-hydroxy-L-erythro-5,6,7,8-tetrahydrobiopterin + L-tyrosine. The catalysed reaction is (6R)-L-erythro-5,6,7,8-tetrahydrobiopterin + L-tryptophan + O2 = 5-hydroxy-L-tryptophan + (4aS,6R)-4a-hydroxy-L-erythro-5,6,7,8-tetrahydrobiopterin. It functions in the pathway amino-acid degradation; L-phenylalanine degradation; acetoacetate and fumarate from L-phenylalanine: step 1/6. With respect to regulation, N-terminal region of PAH is thought to contain allosteric binding sites for phenylalanine and to constitute an 'inhibitory' domain that regulates the activity of a catalytic domain in the C-terminal portion of the molecule. The sequence is that of Protein henna (Hn) from Drosophila melanogaster (Fruit fly).